A 104-amino-acid polypeptide reads, in one-letter code: Phosphoribosyl-ATP pyrophosphatase (104 aa).

This sequence belongs to the PRA-PH family.

The protein resides in the cytoplasm. The enzyme catalyses 1-(5-phospho-beta-D-ribosyl)-ATP + H2O = 1-(5-phospho-beta-D-ribosyl)-5'-AMP + diphosphate + H(+). It participates in amino-acid biosynthesis; L-histidine biosynthesis; L-histidine from 5-phospho-alpha-D-ribose 1-diphosphate: step 2/9. In Allorhizobium ampelinum (strain ATCC BAA-846 / DSM 112012 / S4) (Agrobacterium vitis (strain S4)), this protein is Phosphoribosyl-ATP pyrophosphatase.